The sequence spans 49 residues: MIQKPILLSSFLFLYIRALLHSIHPYIRTSVHLYTKKITSYNFLGVPFK.

A signal peptide spans 1 to 22 (MIQKPILLSSFLFLYIRALLHS).

This is an uncharacterized protein from Saccharomyces cerevisiae (strain ATCC 204508 / S288c) (Baker's yeast).